The primary structure comprises 132 residues: uncharacterized protein (132 aa).

Positions leucine 107–aspartate 132 are disordered. A compositionally biased stretch (polar residues) spans asparagine 108–serine 122.

This is an uncharacterized protein from Bacillus subtilis (strain 168).